The primary structure comprises 342 residues: Isopentenyl-diphosphate delta-isomerase (342 aa).

A substrate-binding site is contributed by 11 to 12; sequence RK. FMN contacts are provided by residues Ser68, 69–71, Ser99, and Asn127; that span reads SMT. 99 to 101 is a binding site for substrate; it reads SMR. Residue Gln162 coordinates substrate. Glu163 contacts Mg(2+). Residues Lys194, Thr224, 274-276, and 295-296 each bind FMN; these read GLK and AG.

This sequence belongs to the IPP isomerase type 2 family. As to quaternary structure, homooctamer. Dimer of tetramers. The cofactor is FMN. Requires NADPH as cofactor. It depends on Mg(2+) as a cofactor.

Its subcellular location is the cytoplasm. It carries out the reaction isopentenyl diphosphate = dimethylallyl diphosphate. Involved in the biosynthesis of isoprenoids. Catalyzes the 1,3-allylic rearrangement of the homoallylic substrate isopentenyl (IPP) to its allylic isomer, dimethylallyl diphosphate (DMAPP). The protein is Isopentenyl-diphosphate delta-isomerase of Rickettsia canadensis (strain McKiel).